The following is an 830-amino-acid chain: P-selectin (830 aa).

Residues 1 to 41 (MANCQIAILYQRFQRVVFGISQLLCFSALISELTNQKEVAA) form the signal peptide. Residues 42 to 771 (WTYHYSTKAY…QAGPLTIQEA (730 aa)) are Extracellular-facing. Asn-54 and Asn-98 each carry an N-linked (GlcNAc...) asparagine glycan. A C-type lectin domain is found at 58–158 (KYCQNRYTDL…HCLKKKHALC (101 aa)). 23 disulfides stabilise this stretch: Cys-60–Cys-158, Cys-131–Cys-150, Cys-163–Cys-174, Cys-168–Cys-183, Cys-185–Cys-194, Cys-200–Cys-244, Cys-230–Cys-257, Cys-262–Cys-306, Cys-292–Cys-319, Cys-324–Cys-368, Cys-354–Cys-381, Cys-386–Cys-430, Cys-416–Cys-443, Cys-448–Cys-492, Cys-478–Cys-505, Cys-510–Cys-554, Cys-540–Cys-567, Cys-572–Cys-616, Cys-602–Cys-629, Cys-642–Cys-686, Cys-672–Cys-699, Cys-704–Cys-748, and Cys-734–Cys-761. Glu-121, Asn-123, and Asn-124 together coordinate Ca(2+). An a carbohydrate-binding site is contributed by Asn-123. Glu-133 and Asn-146 together coordinate a carbohydrate. 2 residues coordinate Ca(2+): Asn-146 and Asp-147. Residues 159–195 (YTASCQDMSCSKQGECLETIGNYTCSCYPGFYGPECE) form the EGF-like domain. A glycan (N-linked (GlcNAc...) asparagine) is linked at Asn-180. Sushi domains are found at residues 198–259 (RECG…QCLA), 260–321 (AQCP…VCKA), 322–383 (VQCQ…TCEA), 384–445 (ISCE…VCQA), 446–507 (LQCQ…ECQA), 508–569 (IPCT…MCEA), 570–631 (IKCP…TCKG), 640–701 (VQCP…ACRA), and 702–763 (VKCS…TCQA). Residues Asn-212 and Asn-219 are each glycosylated (N-linked (GlcNAc...) asparagine). Asn-411 carries an N-linked (GlcNAc...) asparagine glycan. An N-linked (GlcNAc...) asparagine glycan is attached at Asn-460. N-linked (GlcNAc...) asparagine glycosylation is present at Asn-518. The N-linked (GlcNAc...) asparagine glycan is linked to Asn-665. Asn-716, Asn-723, and Asn-741 each carry an N-linked (GlcNAc...) asparagine glycan. The chain crosses the membrane as a helical span at residues 772-795 (LTYFGGAVASTIGLIMGGTLLALL). The Cytoplasmic segment spans residues 796–830 (RKRFRQKDDGKCPLNPHSHLGTYGVFTNAAFDPSP). Cys-807 carries the S-palmitoyl cysteine; alternate lipid modification. The S-stearoyl cysteine; alternate moiety is linked to residue Cys-807. An Endocytosis signal motif is present at residues 818–821 (YGVF). The interval 821 to 830 (FTNAAFDPSP) is interaction with SNX17.

Belongs to the selectin/LECAM family. As to quaternary structure, interacts with SNX17. Interacts with SELPLG/PSGL1 and PODXL2 and mediates neutrophil adhesion and leukocyte rolling. This interaction requires the sialyl-Lewis X epitope of SELPLG and PODXL2, and specific tyrosine sulfation on SELPLG. Interacts (via C-type lectin domain) with alpha-IIb/beta3 integrin ITGA2B:ITGB3 and alpha-V/beta-3 integrin ITGAV:ITGB3. Interacts with alpha5/beta1 integrin ITGA5:ITGB1 and alpha4/beta1 integrin ITGA4:ITGB. Stored in the alpha-granules of platelets and Weibel-Palade bodies of endothelial cells. Upon cell activation by agonists, P-selectin is transported rapidly to the cell surface.

It is found in the cell membrane. Its function is as follows. Ca(2+)-dependent receptor for myeloid cells that binds to carbohydrates on neutrophils and monocytes. Mediates the interaction of activated endothelial cells or platelets with leukocytes. The ligand recognized is sialyl-Lewis X. Mediates rapid rolling of leukocyte rolling over vascular surfaces during the initial steps in inflammation through interaction with SELPLG. Mediates cell-cell interactions and cell adhesion via the interaction with integrin alpha-IIb/beta3 (ITGA2B:ITGB3) and integrin alpha-V/beta-3 (ITGAV:ITGB3). In Homo sapiens (Human), this protein is P-selectin (SELP).